Reading from the N-terminus, the 109-residue chain is Large ribosomal subunit protein eL30 (109 aa).

The protein belongs to the eukaryotic ribosomal protein eL30 family.

The polypeptide is Large ribosomal subunit protein eL30 (RPL30) (Yarrowia lipolytica (strain CLIB 122 / E 150) (Yeast)).